The primary structure comprises 251 residues: Tail tip protein L (251 aa).

Residues C184, C198, C221, and C228 each coordinate [4Fe-4S] cluster.

Belongs to the lambda-like tail tip protein L family. [4Fe-4S] cluster serves as cofactor.

It localises to the virion. Its subcellular location is the host cytoplasm. In terms of biological role, part of the distal tail tip complex which plays a role in DNA injection during entry, and in tail assembly initiation during exit. The tail tip complex is assembled successively with three tail central fiber proteins J, one tail tip protein I, one tail tip protein L and one tail tip protein K. The tail tip complex interacts with tail measure protein to initiate tail tube assembly. The formation of the tail tip complex is completed by the addition of tail tip protein M, which is followed by tail tube polymerization. This chain is Tail tip protein L, found in Escherichia phage N15 (Bacteriophage N15).